Consider the following 335-residue polypeptide: MIEIDGSFGEGGGQILRTSLTLSSLTKKPFRIYNIRANRPKPGLQRQHLTAVNAVKILTNATVKGDYVGSTELIFSPGDIQEKGDFVFDIGTAGSTTLILQTILPLLLNRKLTVTIKGGTDVPKSPSIDYIRLVFSKVLERIGISFNVELIKRGHYPEGGGEIRISNVRGEPQRFSITEFGQLEGFVGISHVSSLPVHIADRQKSSAEKILRRLKDKIDIRLDVREGEISKGSGICLSAIGKYGIIGADALGERGKRAETVGEEAALKLLEELKTNAAFDSHMGDMLMLYASLYQGEYTASKLTLHSITNEKVIRKFIDIKGEIKGSSPFLFRVQ.

Residues Gln101 and 282 to 285 each bind ATP; that span reads HMGD. His306 (tele-AMP-histidine intermediate) is an active-site residue.

This sequence belongs to the RNA 3'-terminal cyclase family. Type 1 subfamily.

The protein localises to the cytoplasm. It catalyses the reaction a 3'-end 3'-phospho-ribonucleotide-RNA + ATP = a 3'-end 2',3'-cyclophospho-ribonucleotide-RNA + AMP + diphosphate. Its function is as follows. Catalyzes the conversion of 3'-phosphate to a 2',3'-cyclic phosphodiester at the end of RNA. The mechanism of action of the enzyme occurs in 3 steps: (A) adenylation of the enzyme by ATP; (B) transfer of adenylate to an RNA-N3'P to produce RNA-N3'PP5'A; (C) and attack of the adjacent 2'-hydroxyl on the 3'-phosphorus in the diester linkage to produce the cyclic end product. The biological role of this enzyme is unknown but it is likely to function in some aspects of cellular RNA processing. The chain is RNA 3'-terminal phosphate cyclase from Sulfolobus acidocaldarius (strain ATCC 33909 / DSM 639 / JCM 8929 / NBRC 15157 / NCIMB 11770).